An 89-amino-acid chain; its full sequence is Small ribosomal subunit protein uS15 (89 aa).

This sequence belongs to the universal ribosomal protein uS15 family. In terms of assembly, part of the 30S ribosomal subunit. Forms a bridge to the 50S subunit in the 70S ribosome, contacting the 23S rRNA.

In terms of biological role, one of the primary rRNA binding proteins, it binds directly to 16S rRNA where it helps nucleate assembly of the platform of the 30S subunit by binding and bridging several RNA helices of the 16S rRNA. Forms an intersubunit bridge (bridge B4) with the 23S rRNA of the 50S subunit in the ribosome. In Elusimicrobium minutum (strain Pei191), this protein is Small ribosomal subunit protein uS15.